Here is a 128-residue protein sequence, read N- to C-terminus: Protein ripply2 (128 aa).

Residues 1 to 63 (MENAGGAEGT…HAAEAMPDGP (63 aa)) form a disordered region. Positions 9–22 (GTESGAAACAATDG) are enriched in low complexity. Residues 37–40 (WRPW) carry the WRPW motif motif. Positions 77–112 (HPVRLFWPKSKCYDYLYQEAEALLKNFPIQATISFY) are ripply homology domain.

The protein belongs to the ripply family.

The protein resides in the nucleus. In terms of biological role, plays a role in somitogenesis. Required for somite segregation and establishment of rostrocaudal polarity in somites. The polypeptide is Protein ripply2 (RIPPLY2) (Homo sapiens (Human)).